Consider the following 342-residue polypeptide: Cytosolic Fe-S cluster assembly factor NBP35 (342 aa).

The segment at 16–42 (SKAAPKLVAPEPEHCPGPESEQAGKGD) is disordered. Residues Cys-30, Cys-44, Cys-47, and Cys-53 each coordinate [4Fe-4S] cluster. 83–90 (GKGGVGKS) is an ATP binding site. [4Fe-4S] cluster-binding residues include Cys-256 and Cys-259.

It belongs to the Mrp/NBP35 ATP-binding proteins family. NUBP1/NBP35 subfamily. Heterotetramer of 2 NBP35 and 2 CFD1 chains. [4Fe-4S] cluster is required as a cofactor.

The protein resides in the cytoplasm. Component of the cytosolic iron-sulfur (Fe/S) protein assembly (CIA) machinery. Required for maturation of extramitochondrial Fe-S proteins. The NBP35-CFD1 heterotetramer forms a Fe-S scaffold complex, mediating the de novo assembly of an Fe-S cluster and its transfer to target apoproteins. The sequence is that of Cytosolic Fe-S cluster assembly factor NBP35 from Coccidioides immitis (strain RS) (Valley fever fungus).